Reading from the N-terminus, the 757-residue chain is MTTFHVLGFPRVGAKRELKFAQERYWRKELAEQDLLDLAKALREKNWKHQADANADFMAVGDFTFYDHILDLQVATGAIPARFGFDSKNLTLDQYFQLARGNKDQFAIEMTKWFDTNYHYLVPEFHKDTQFKANPTHYVNQIREAKVAGHQVKPVIVGPLTFLWLGKEKGESFNRFELLAQLVPVYVEILNALVAEGTEWIQIDEPALAVDLPKEWVNAYKDVYATLSEKVNAKLLLATYFGSVTEHATLLKELPVDGLHLDLVRAPEQLVAFEDYNKVLSAGVIDGRNIWRANLNTVLDVLEPLKEKLGERLWIAPSCSLLHTPFDLNVETQLQENNPALYSWLAFTLQKVQELSVLKTALEKGRNAVNVELDASQVAADARANSKEIHRPEVAERLANLPKNADQRKSPFGERIKLQNAWLNLPLLPTTSIGSFPQTTEIRRARAAFKKGDLSLEEYENSMKKEIELVVREQEKLDLDVLVHGEPERNDMVEYFGELLDGFAFTKFGWVQSYGSRCVKPPVIYGDVVRPEPMTVRWSKYAQSLTKKVMKGMLTGPVTILQWSFVRNDIPRSTVCKQIGVALSDEVLDLEKAGIKVIQIDEPAIREGLPLKRADWDTYLQWAGEAFRLSSMGVADDTQIHTHMCYSEFNDILPAIAALDADVITIETSRSDMELLTAFGDFKYPNDIGPGVYDIHSPRVPTAEEIEHLLRKALNVVPKERLWVNPDCGLKTRGWSETIAQLEVMMSVTKKLRAELA.

5-methyltetrahydropteroyltri-L-glutamate is bound by residues 16–19 and lysine 112; that span reads RELK. L-homocysteine is bound by residues 433–435 and glutamate 486; that span reads IGS. Residues 433–435 and glutamate 486 contribute to the L-methionine site; that span reads IGS. Residues 517 to 518 and tryptophan 563 each bind 5-methyltetrahydropteroyltri-L-glutamate; that span reads RC. Residue aspartate 601 participates in L-homocysteine binding. Aspartate 601 is an L-methionine binding site. A 5-methyltetrahydropteroyltri-L-glutamate-binding site is contributed by glutamate 607. Zn(2+)-binding residues include histidine 643, cysteine 645, and glutamate 667. The active-site Proton donor is the histidine 696. Position 728 (cysteine 728) interacts with Zn(2+).

It belongs to the vitamin-B12 independent methionine synthase family. Zn(2+) is required as a cofactor.

The enzyme catalyses 5-methyltetrahydropteroyltri-L-glutamate + L-homocysteine = tetrahydropteroyltri-L-glutamate + L-methionine. It participates in amino-acid biosynthesis; L-methionine biosynthesis via de novo pathway; L-methionine from L-homocysteine (MetE route): step 1/1. Its function is as follows. Catalyzes the transfer of a methyl group from 5-methyltetrahydrofolate to homocysteine resulting in methionine formation. The chain is 5-methyltetrahydropteroyltriglutamate--homocysteine methyltransferase from Histophilus somni (strain 2336) (Haemophilus somnus).